A 232-amino-acid polypeptide reads, in one-letter code: MSNPTIEGDENRKENTKSNTKPNFDDLDDLDDILDDLDVPSAFKNEEKKNIDEHKQTGNTSKENERIKNDDNLNSLIQEMMSKFEDLGGPSGLDGSQLSSSFQNDQLLNVILEDQFATEKDSDNGAVNYGALEAALNSLMSQVTSKEILYEPLKDLEANYPKFLKNAKETEKQGFEEQYQKIQKCIQIFESPEYDARKDADIISKLVEEIQEKPLPAPLIDNSMETAGCPTQ.

Positions 1-71 (MSNPTIEGDE…KENERIKNDD (71 aa)) are disordered. Residues 25-38 (DDLDDLDDILDDLD) are compositionally biased toward acidic residues. Basic and acidic residues predominate over residues 44–71 (KNEEKKNIDEHKQTGNTSKENERIKNDD).

This is an uncharacterized protein from Schizosaccharomyces pombe (strain 972 / ATCC 24843) (Fission yeast).